The following is a 119-amino-acid chain: Large ribosomal subunit protein bL20 (119 aa).

It belongs to the bacterial ribosomal protein bL20 family.

Its function is as follows. Binds directly to 23S ribosomal RNA and is necessary for the in vitro assembly process of the 50S ribosomal subunit. It is not involved in the protein synthesizing functions of that subunit. In Xylella fastidiosa (strain M23), this protein is Large ribosomal subunit protein bL20.